The primary structure comprises 495 residues: Inner membrane ALBINO3-like protein 1, chloroplastic (495 aa).

The chain crosses the membrane as a helical span at residues Leu76–Pro96. At Thr97 to Pro206 the chain is on the stromal side. The chain crosses the membrane as a helical span at residues Leu207–Leu227. Over Thr228–Ala273 the chain is Lumenal. Residues Pro274 to Val294 form a helical membrane-spanning segment. Topologically, residues Gln295–Arg317 are stromal. Residues Ala318–Leu338 traverse the membrane as a helical segment. At Ser339 to Ser441 the chain is on the lumenal side. Residues Thr442 to Met462 traverse the membrane as a helical segment. The Stromal portion of the chain corresponds to Asp463–Ala495.

Belongs to the OXA1/ALB3/YidC (TC 2.A.9.2) family. As to quaternary structure, associates with the LHCII complex and with the psaE subunit of the LHCI complex.

The protein resides in the plastid. It localises to the chloroplast thylakoid membrane. Its function is as follows. Required for the insertion of some light-harvesting complexes (LHC) proteins into the chloroplast thylakoid membrane. Essential for the assembly and activity of LHC I and II. Its function is probably partly distinct from that of ALB3.2. The polypeptide is Inner membrane ALBINO3-like protein 1, chloroplastic (ALB3.1) (Chlamydomonas reinhardtii (Chlamydomonas smithii)).